Reading from the N-terminus, the 305-residue chain is Acetaldehyde dehydrogenase (305 aa).

Residue 13-16 (SGNI) coordinates NAD(+). Catalysis depends on C128, which acts as the Acyl-thioester intermediate. Residues 159–167 (SAGPGTRQN) and N278 contribute to the NAD(+) site.

This sequence belongs to the acetaldehyde dehydrogenase family.

The catalysed reaction is acetaldehyde + NAD(+) + CoA = acetyl-CoA + NADH + H(+). The polypeptide is Acetaldehyde dehydrogenase (Roseiflexus sp. (strain RS-1)).